The following is a 131-amino-acid chain: Glycine cleavage system H protein (131 aa).

The region spanning 24–106 (RVTVGISDHA…YGEGWIFVVE (83 aa)) is the Lipoyl-binding domain. K65 is subject to N6-lipoyllysine.

Belongs to the GcvH family. In terms of assembly, the glycine cleavage system is composed of four proteins: P, T, L and H. Requires (R)-lipoate as cofactor.

The glycine cleavage system catalyzes the degradation of glycine. The H protein shuttles the methylamine group of glycine from the P protein to the T protein. This is Glycine cleavage system H protein from Xanthomonas campestris pv. campestris (strain 8004).